The primary structure comprises 124 residues: Chemotaxis protein CheY1 (124 aa).

In terms of domain architecture, Response regulatory spans 2 to 120 (KLLVVDDSST…VLKEKLEVVL (119 aa)). Asp-7, Asp-8, Asp-53, and Asn-55 together coordinate Mg(2+). Asp-53 bears the 4-aspartylphosphate mark.

As to quaternary structure, interacts (when phosphorylated) with FliM. It depends on Mg(2+) as a cofactor. In terms of processing, phosphorylated by CheAY. Dephosphorylated (inactivated) by CheZ.

The protein localises to the cytoplasm. Chemotactic response regulator protein that modulates the rotation direction of bacterial flagellar motors. Plays an important role in the colonization and infection of Helicobacter pylori. Upon phosphorylation by CheA, interacts with the flagellar motor protein FliM to cause clockwise flagellar rotation and bacterial reversals, as opposed to straight swimming when CheY1 is not phosphorylated. This Helicobacter pylori (strain ATCC 700392 / 26695) (Campylobacter pylori) protein is Chemotaxis protein CheY1.